Here is a 433-residue protein sequence, read N- to C-terminus: MAATAHGLCEFIDASPSPFHVCATVAGRLLGAGYRELREADRWPDKPGRYFTVRAGSLVAWNAEQSGHTQVPFRIVGAHTDSPNLRVKQHPDRLVAGWHVVALQPYGGVWLHSWLDRDLGISGRLSVRDGTGVSHRLVLIDDPILRVPQLAIHLAEDRKSLTLDPQRHINAVWGVGERVESFVGYVAQRAGVAAADVLAADLMTHDLTPSALIGASVNGTASLLSAPRLDNQASCYAGMEALLAVDVDSASSGFVPVLAIFDHEEVGSASGHGAQSDLLSSVLERIVLAAGGTREDFLRRLTTSMLASADMAHATHPNYPDRHEPSHPIEVNAGPVLKVHPNLRYATDGRTAAAFALACQRAGVPMQRYEHRADLPCGSTIGPLAAARTGIPTVDVGAAQLAMHSARELMGAHDVAAYSAALQAFLSAELSEA.

Histidine 79, histidine 153, and histidine 404 together coordinate Zn(2+).

Belongs to the peptidase M18 family. The cofactor is Zn(2+).

This chain is Probable M18 family aminopeptidase 2, found in Mycobacterium tuberculosis (strain ATCC 25177 / H37Ra).